The following is a 312-amino-acid chain: DNA-directed RNA polymerase subunit alpha (312 aa).

The interval 1–229 is alpha N-terminal domain (alpha-NTD); it reads MLQYQIDRID…ELFQPLATVT (229 aa). The segment at 241–312 is alpha C-terminal domain (alpha-CTD); it reads SPEAQIPLEE…ISIPQSRTSV (72 aa).

This sequence belongs to the RNA polymerase alpha chain family. As to quaternary structure, in cyanobacteria the RNAP catalytic core is composed of 2 alpha, 1 beta, 1 beta', 1 gamma and 1 omega subunit. When a sigma factor is associated with the core the holoenzyme is formed, which can initiate transcription.

The catalysed reaction is RNA(n) + a ribonucleoside 5'-triphosphate = RNA(n+1) + diphosphate. In terms of biological role, DNA-dependent RNA polymerase catalyzes the transcription of DNA into RNA using the four ribonucleoside triphosphates as substrates. The sequence is that of DNA-directed RNA polymerase subunit alpha from Prochlorococcus marinus (strain MIT 9215).